Consider the following 249-residue polypeptide: Ribosomal RNA small subunit methyltransferase J (249 aa).

Residues R101–D102, E117–R118, and D171 each bind S-adenosyl-L-methionine.

It belongs to the methyltransferase superfamily. RsmJ family.

The protein localises to the cytoplasm. It catalyses the reaction guanosine(1516) in 16S rRNA + S-adenosyl-L-methionine = N(2)-methylguanosine(1516) in 16S rRNA + S-adenosyl-L-homocysteine + H(+). Functionally, specifically methylates the guanosine in position 1516 of 16S rRNA. This chain is Ribosomal RNA small subunit methyltransferase J, found in Tolumonas auensis (strain DSM 9187 / NBRC 110442 / TA 4).